Here is a 224-residue protein sequence, read N- to C-terminus: CASP-like protein 3A1 (224 aa).

At 1 to 59 (MMMNGQKLAPAAEVAVQLPESKVAADNISGTMSGPLVGASGGGTTAAMRPFGRKAEVMH) the chain is on the cytoplasmic side. Residues 60–80 (VLLRLLCIITSVAALSFMFTA) traverse the membrane as a helical segment. Residues 81–106 (QQSSTISIYGFMLPVQSKWSFSHSFE) are Extracellular-facing. Residues 107–127 (YLVGVSAAVAAHSLLQLLISM) form a helical membrane-spanning segment. The Cytoplasmic segment spans residues 128–142 (SRLLRKSPVIPSRSH). A helical membrane pass occupies residues 143-163 (AWLIFAGDQVFAYAMISAGAA). Residues 164 to 192 (ASGVTNLNRTGIQHTALPNFCKPLQSFCD) are Extracellular-facing. N-linked (GlcNAc...) asparagine glycosylation is present at N171. Residues 193-213 (HVAVSIFFTFTSCFLLAASAV) form a helical membrane-spanning segment. Residues 214-224 (QEVIWLSRSKY) lie on the Cytoplasmic side of the membrane.

This sequence belongs to the Casparian strip membrane proteins (CASP) family. In terms of assembly, homodimer and heterodimers.

It localises to the cell membrane. The sequence is that of CASP-like protein 3A1 from Populus trichocarpa (Western balsam poplar).